A 316-amino-acid polypeptide reads, in one-letter code: Aspartate carbamoyltransferase catalytic subunit (316 aa).

Residues R66 and T67 each contribute to the carbamoyl phosphate site. K94 serves as a coordination point for L-aspartate. R116, H146, and Q149 together coordinate carbamoyl phosphate. Positions 180 and 235 each coordinate L-aspartate. Carbamoyl phosphate is bound by residues G276 and P277.

It belongs to the aspartate/ornithine carbamoyltransferase superfamily. ATCase family. Heterododecamer (2C3:3R2) of six catalytic PyrB chains organized as two trimers (C3), and six regulatory PyrI chains organized as three dimers (R2).

It carries out the reaction carbamoyl phosphate + L-aspartate = N-carbamoyl-L-aspartate + phosphate + H(+). It participates in pyrimidine metabolism; UMP biosynthesis via de novo pathway; (S)-dihydroorotate from bicarbonate: step 2/3. Its function is as follows. Catalyzes the condensation of carbamoyl phosphate and aspartate to form carbamoyl aspartate and inorganic phosphate, the committed step in the de novo pyrimidine nucleotide biosynthesis pathway. In Stenotrophomonas maltophilia (strain K279a), this protein is Aspartate carbamoyltransferase catalytic subunit.